The primary structure comprises 200 residues: Nitrile hydratase subunit alpha (200 aa).

Fe(3+)-binding residues include C105, C108, S109, and C110. C108 carries the post-translational modification Cysteine sulfinic acid (-SO2H). Residue C110 is modified to Cysteine sulfenic acid (-SOH).

Belongs to the nitrile hydratase subunit alpha family. As to quaternary structure, heterodimer of an alpha and a beta chain. It depends on Fe(3+) as a cofactor. In terms of processing, oxidation on Cys-108 is essential for the activity. Oxidation on Cys-110 stabilizes the Fe-NO ligand coordinated in the inactive form.

It carries out the reaction an aliphatic primary amide = an aliphatic nitrile + H2O. Its activity is regulated as follows. Inactivated by oxidation of Cys-110 to a sulfenic acid. In terms of biological role, NHase catalyzes the hydration of various nitrile compounds to the corresponding amides. Industrial production of acrylamide is now being developed using some of the enzymes of this class. The protein is Nitrile hydratase subunit alpha (nthA) of Pseudomonas chlororaphis (Pseudomonas aureofaciens).